A 388-amino-acid polypeptide reads, in one-letter code: Acetate kinase (388 aa).

Asn-7 lines the Mg(2+) pocket. Lys-14 serves as a coordination point for ATP. Arg-76 is a substrate binding site. The active-site Proton donor/acceptor is the Asp-133. ATP is bound by residues His-193 to Gly-197, Asp-267 to Arg-269, and Gly-315 to Asn-319. Glu-374 contacts Mg(2+).

This sequence belongs to the acetokinase family. Homodimer. It depends on Mg(2+) as a cofactor. The cofactor is Mn(2+).

It is found in the cytoplasm. It carries out the reaction acetate + ATP = acetyl phosphate + ADP. The protein operates within metabolic intermediate biosynthesis; acetyl-CoA biosynthesis; acetyl-CoA from acetate: step 1/2. Functionally, catalyzes the formation of acetyl phosphate from acetate and ATP. Can also catalyze the reverse reaction. This is Acetate kinase from Micrococcus luteus (strain ATCC 4698 / DSM 20030 / JCM 1464 / CCM 169 / CCUG 5858 / IAM 1056 / NBRC 3333 / NCIMB 9278 / NCTC 2665 / VKM Ac-2230) (Micrococcus lysodeikticus).